The sequence spans 153 residues: Protein ElaA (153 aa).

An N-acetyltransferase domain is found at 7–151 (LHHSELSVSQ…PHIGMAREVI (145 aa)).

It belongs to the UPF0039 (ElaA) family.

The protein is Protein ElaA (elaA) of Escherichia coli (strain K12).